The primary structure comprises 840 residues: Lethal(3)malignant brain tumor-like protein 1 (840 aa).

Serine 117 is modified (phosphoserine). A disordered region spans residues glutamate 127–glutamate 269. A compositionally biased stretch (acidic residues) spans proline 156 to serine 165. Residues valine 200 to serine 210 are compositionally biased toward polar residues. Residues alanine 236–glutamate 247 show a composition bias toward basic and acidic residues. The span at proline 250–alanine 266 shows a compositional bias: polar residues. MBT repeat units lie at residues tryptophan 274–proline 374, phenylalanine 382–proline 481, and phenylalanine 490–proline 585. The interaction with monomethylated and dimethylated peptides stretch occupies residues phenylalanine 447–tyrosine 454. Positions histidine 580–arginine 605 are disordered. The segment at serine 613–leucine 656 adopts a CCHHC-type zinc-finger fold. Positions 622, 627, 640, and 646 each coordinate Zn(2+). The disordered stretch occupies residues lysine 657–proline 697. The segment covering proline 677–lysine 695 has biased composition (basic residues).

Homodimer. Interacts with RB1/RB (when monomethylated at 'Lys-860'). Interacts with p53/TP53 (when monomethylated at 'Lys-382'). Interacts with CBX3, ETV6, KMT5A and VCP/p97. Post-translationally, ubiquitinated in a VCP/p97-dependent way following DNA damage, leading to its removal from DNA damage sites, promoting accessibility of H4K20me2 mark for DNA repair protein TP53BP1, which is then recruited to DNA damage sites. In terms of tissue distribution, widely expressed. Expression is reduced in colorectal cancer cell line SW480 and promyelocytic leukemia cell line HL-60.

The protein resides in the nucleus. Its function is as follows. Polycomb group (PcG) protein that specifically recognizes and binds mono- and dimethyllysine residues on target proteins, thereby acting as a 'reader' of a network of post-translational modifications. PcG proteins maintain the transcriptionally repressive state of genes: acts as a chromatin compaction factor by recognizing and binding mono- and dimethylated histone H1b/H1-4 at 'Lys-26' (H1bK26me1 and H1bK26me2) and histone H4 at 'Lys-20' (H4K20me1 and H4K20me2), leading to condense chromatin and repress transcription. Recognizes and binds p53/TP53 monomethylated at 'Lys-382', leading to repress p53/TP53-target genes. Also recognizes and binds RB1/RB monomethylated at 'Lys-860'. Participates in the ETV6-mediated repression. Probably plays a role in cell proliferation. Overexpression induces multinucleated cells, suggesting that it is required to accomplish normal mitosis. In Homo sapiens (Human), this protein is Lethal(3)malignant brain tumor-like protein 1 (L3MBTL1).